The sequence spans 104 residues: Co-chaperonin GroES 2 (104 aa).

The protein belongs to the GroES chaperonin family. In terms of assembly, heptamer of 7 subunits arranged in a ring. Interacts with the chaperonin GroEL.

The protein localises to the cytoplasm. In terms of biological role, together with the chaperonin GroEL, plays an essential role in assisting protein folding. The GroEL-GroES system forms a nano-cage that allows encapsulation of the non-native substrate proteins and provides a physical environment optimized to promote and accelerate protein folding. GroES binds to the apical surface of the GroEL ring, thereby capping the opening of the GroEL channel. This Mesorhizobium japonicum (strain LMG 29417 / CECT 9101 / MAFF 303099) (Mesorhizobium loti (strain MAFF 303099)) protein is Co-chaperonin GroES 2.